The following is a 287-amino-acid chain: Aromatic amino acid exporter YddG (287 aa).

The Cytoplasmic segment spans residues 1-5 (MSRSS). Residues 6 to 24 (ATLIGFTAILLWSTLALAT) form a helical membrane-spanning segment. The EamA 1 domain maps to 7–136 (TLIGFTAILL…MGLAGTVVLL (130 aa)). Over 25-31 (SSTGAVP) the chain is Periplasmic. A helical membrane pass occupies residues 32 to 54 (PFLLTALTFTIGGAVGIAAGLAR). Topologically, residues 55–65 (GVGLSVLRQPW) are cytoplasmic. Residues 66 to 86 (PVWVHGIGGLFGYHFFYFSAL) traverse the membrane as a helical segment. At 87 to 90 (KLAP) the chain is on the periplasmic side. A helical membrane pass occupies residues 91 to 111 (PAEAGLVAYLWPLLIVLFSAF). Residues 112-118 (LPGERLR) are Cytoplasmic-facing. The helical transmembrane segment at 119 to 139 (PAHVAGALMGLAGTVVLLGAR) threads the bilayer. The Periplasmic segment spans residues 140-149 (AGGFGFAPEY). The chain crosses the membrane as a helical span at residues 150–170 (VPGYLAAAACAVIWSVYSVAS). Residues 151–281 (PGYLAAAACA…ALIVGGAAVA (131 aa)) form the EamA 2 domain. The Cytoplasmic segment spans residues 171-176 (RRFARV). Residues 177–198 (PTEVVAGFCLATAALSALCHIL) traverse the membrane as a helical segment. The Periplasmic portion of the chain corresponds to 199–208 (FEPSVWPVGS). A helical membrane pass occupies residues 209–233 (EWLAVVALGIGPVGIAFYTWDIGMK). The Cytoplasmic portion of the chain corresponds to 234 to 236 (RGD). Residues 237–258 (VRLLGVLSYAAPVLSTLLLVVA) traverse the membrane as a helical segment. At 259 to 264 (GFAAPS) the chain is on the periplasmic side. The helical transmembrane segment at 265-284 (GALAIACALIVGGAAVATLL) threads the bilayer. The Cytoplasmic portion of the chain corresponds to 285 to 287 (ARR).

Belongs to the drug/metabolite transporter (DMT) superfamily. Aromatic amino acid/paraquat exporter (ArAA/P-E) (TC 2.A.7.17) family.

The protein resides in the cell inner membrane. It carries out the reaction L-threonine(in) = L-threonine(out). The enzyme catalyses L-methionine(in) = L-methionine(out). It catalyses the reaction L-lysine(in) = L-lysine(out). The catalysed reaction is L-glutamate(out) = L-glutamate(in). Its function is as follows. Amino acid transporter with broad substrate specificity. Can transport various amino acids, including L-threonine, L-methionine, L-lysine and L-glutamate. This chain is Aromatic amino acid exporter YddG, found in Ancylobacter novellus (strain ATCC 8093 / DSM 506 / JCM 20403 / CCM 1077 / IAM 12100 / NBRC 12443 / NCIMB 10456) (Starkeya novella).